Consider the following 115-residue polypeptide: DNA-directed RNA polymerase subunit omega (115 aa).

The protein belongs to the RNA polymerase subunit omega family. In terms of assembly, the RNAP catalytic core consists of 2 alpha, 1 beta, 1 beta' and 1 omega subunit. When a sigma factor is associated with the core the holoenzyme is formed, which can initiate transcription.

It catalyses the reaction RNA(n) + a ribonucleoside 5'-triphosphate = RNA(n+1) + diphosphate. Its function is as follows. Promotes RNA polymerase assembly. Latches the N- and C-terminal regions of the beta' subunit thereby facilitating its interaction with the beta and alpha subunits. This Cutibacterium acnes (strain DSM 16379 / KPA171202) (Propionibacterium acnes) protein is DNA-directed RNA polymerase subunit omega.